We begin with the raw amino-acid sequence, 334 residues long: Ornithine carbamoyltransferase, catabolic (334 aa).

Carbamoyl phosphate-binding positions include 57-60 (STRT), glutamine 84, arginine 108, and 135-138 (HPTQ). Residues asparagine 169, aspartate 233, and 237–238 (SM) each bind L-ornithine. Carbamoyl phosphate is bound by residues 275 to 276 (CL) and arginine 320.

It belongs to the aspartate/ornithine carbamoyltransferase superfamily. OTCase family.

It is found in the cytoplasm. The enzyme catalyses carbamoyl phosphate + L-ornithine = L-citrulline + phosphate + H(+). The protein operates within amino-acid degradation; L-arginine degradation via ADI pathway; carbamoyl phosphate from L-arginine: step 2/2. Functionally, reversibly catalyzes the transfer of the carbamoyl group from carbamoyl phosphate (CP) to the N(epsilon) atom of ornithine (ORN) to produce L-citrulline. In Salmonella typhimurium (strain LT2 / SGSC1412 / ATCC 700720), this protein is Ornithine carbamoyltransferase, catabolic (arcB).